Here is a 116-residue protein sequence, read N- to C-terminus: SPbeta prophage-derived uncharacterized protein YoqA (116 aa).

The sequence is that of SPbeta prophage-derived uncharacterized protein YoqA (yoqA) from Bacillus subtilis (strain 168).